The following is a 689-amino-acid chain: DNA ligase (689 aa).

Residues 35 to 39 (DEVYD), 84 to 85 (SL), and glutamate 122 each bind NAD(+). Catalysis depends on lysine 124, which acts as the N6-AMP-lysine intermediate. NAD(+) contacts are provided by arginine 145, glutamate 182, lysine 308, and lysine 332. Positions 426, 429, 444, and 449 each coordinate Zn(2+). Residues 612–689 (TTEKSLNGKR…NETELIQMCR (78 aa)) enclose the BRCT domain.

This sequence belongs to the NAD-dependent DNA ligase family. LigA subfamily. Requires Mg(2+) as cofactor. Mn(2+) is required as a cofactor.

It catalyses the reaction NAD(+) + (deoxyribonucleotide)n-3'-hydroxyl + 5'-phospho-(deoxyribonucleotide)m = (deoxyribonucleotide)n+m + AMP + beta-nicotinamide D-nucleotide.. In terms of biological role, DNA ligase that catalyzes the formation of phosphodiester linkages between 5'-phosphoryl and 3'-hydroxyl groups in double-stranded DNA using NAD as a coenzyme and as the energy source for the reaction. It is essential for DNA replication and repair of damaged DNA. The chain is DNA ligase from Thermosynechococcus vestitus (strain NIES-2133 / IAM M-273 / BP-1).